Reading from the N-terminus, the 209-residue chain is MFGLIGKKVGMTQVFQSNGIVVPVTVIEFEPNYVIGKKTMERDGYDALIMGSVDLKGSKVSRPIKGQYKKLENIEPKRYVIEFKGLKGYDAGDEVGLDAFREIKYVDITGTTKGKGFQGAMKRHNFSGGPSSHGSKFHRHLGGTGQATTPARTFKGTKMAGRMGGEQQTIQNLEIVFIDEEKRAILVKGAVPGVKGSFVIVKKAKKVGI.

Residues 127-151 are disordered; that stretch reads SGGPSSHGSKFHRHLGGTGQATTPA.

It belongs to the universal ribosomal protein uL3 family. Part of the 50S ribosomal subunit. Forms a cluster with proteins L14 and L19.

In terms of biological role, one of the primary rRNA binding proteins, it binds directly near the 3'-end of the 23S rRNA, where it nucleates assembly of the 50S subunit. The polypeptide is Large ribosomal subunit protein uL3 (Borrelia duttonii (strain Ly)).